Consider the following 633-residue polypeptide: Threonine--tRNA ligase (633 aa).

The 59-residue stretch at 1–59 (MIRITFSAEQKVKEYSGKVTGFDILQPDVLKEAIAFKVNGELHDLSREIEADAEIEVIQ) folds into the TGS domain. Residues 240 to 532 (DHRKIAKDMD…LIENYAGKFP (293 aa)) are catalytic. Cys332, His383, and His509 together coordinate Zn(2+).

Belongs to the class-II aminoacyl-tRNA synthetase family. Homodimer. Requires Zn(2+) as cofactor.

The protein localises to the cytoplasm. The catalysed reaction is tRNA(Thr) + L-threonine + ATP = L-threonyl-tRNA(Thr) + AMP + diphosphate + H(+). In terms of biological role, catalyzes the attachment of threonine to tRNA(Thr) in a two-step reaction: L-threonine is first activated by ATP to form Thr-AMP and then transferred to the acceptor end of tRNA(Thr). Also edits incorrectly charged L-seryl-tRNA(Thr). This is Threonine--tRNA ligase from Wolbachia sp. subsp. Drosophila simulans (strain wRi).